We begin with the raw amino-acid sequence, 69 residues long: Conotoxin Gla-TxXI (69 aa).

The N-terminal stretch at 1–25 is a signal peptide; the sequence is MVRVTSVGCFLLVIVSLNLVVLTNA. Intrachain disulfides connect cysteine 26–cysteine 40, cysteine 33–cysteine 45, cysteine 39–cysteine 49, and cysteine 44–cysteine 53. Glutamate 29 is subject to 4-carboxyglutamate. Position 56 is a proline amide (proline 56). Positions 60–69 are excised as a propeptide; the sequence is AKLLEFFRQR.

Contains 4 disulfide bonds. As to expression, expressed by the venom duct.

Its subcellular location is the secreted. In Conus textile (Cloth-of-gold cone), this protein is Conotoxin Gla-TxXI.